The sequence spans 142 residues: Large ribosomal subunit protein uL11 (142 aa).

It belongs to the universal ribosomal protein uL11 family. In terms of assembly, part of the ribosomal stalk of the 50S ribosomal subunit. Interacts with L10 and the large rRNA to form the base of the stalk. L10 forms an elongated spine to which L12 dimers bind in a sequential fashion forming a multimeric L10(L12)X complex. Post-translationally, one or more lysine residues are methylated.

Forms part of the ribosomal stalk which helps the ribosome interact with GTP-bound translation factors. In Edwardsiella ictaluri (strain 93-146), this protein is Large ribosomal subunit protein uL11.